A 411-amino-acid chain; its full sequence is NAD-dependent dihydropyrimidine dehydrogenase subunit PreA (411 aa).

Substrate is bound by residues Asn76 and 134–136 (NFS). Cys137 (nucleophile) is an active-site residue. Residue 201–202 (NT) participates in substrate binding. 4Fe-4S ferredoxin-type domains follow at residues 335–367 (VYPR…WSEK) and 369–398 (RTPH…LGEV). Residues Cys344, Cys347, Cys350, Cys354, Cys378, Cys381, Cys384, and Cys388 each contribute to the [4Fe-4S] cluster site.

Belongs to the dihydropyrimidine dehydrogenase family. Heterotetramer of 2 PreA and 2 PreT subunits. The cofactor is [4Fe-4S] cluster.

It carries out the reaction 5,6-dihydrouracil + NAD(+) = uracil + NADH + H(+). The catalysed reaction is 5,6-dihydrothymine + NAD(+) = thymine + NADH + H(+). Involved in pyrimidine base degradation. Catalyzes physiologically the reduction of uracil to 5,6-dihydrouracil (DHU) by using NADH as a specific cosubstrate. It also catalyzes the reverse reaction and the reduction of thymine to 5,6-dihydrothymine (DHT). This Escherichia coli O157:H7 protein is NAD-dependent dihydropyrimidine dehydrogenase subunit PreA (preA).